The chain runs to 336 residues: Phenylalanine--tRNA ligase alpha subunit (336 aa).

Glu259 provides a ligand contact to Mg(2+).

The protein belongs to the class-II aminoacyl-tRNA synthetase family. Phe-tRNA synthetase alpha subunit type 1 subfamily. Tetramer of two alpha and two beta subunits. It depends on Mg(2+) as a cofactor.

Its subcellular location is the cytoplasm. It carries out the reaction tRNA(Phe) + L-phenylalanine + ATP = L-phenylalanyl-tRNA(Phe) + AMP + diphosphate + H(+). This is Phenylalanine--tRNA ligase alpha subunit from Tropheryma whipplei (strain Twist) (Whipple's bacillus).